Here is an 883-residue protein sequence, read N- to C-terminus: Valine--tRNA ligase (883 aa).

Residues 52 to 62 carry the 'HIGH' region motif; it reads PNVTGRLHLGH. The 'KMSKS' region signature appears at 529–533; sequence KMSKS. Lysine 532 contacts ATP. The stretch at 813 to 848 forms a coiled coil; the sequence is LEGLIDFDKEIKRLENELAKWTKEVERVQKKLSNQG.

The protein belongs to the class-I aminoacyl-tRNA synthetase family. ValS type 1 subfamily. Monomer.

The protein resides in the cytoplasm. The catalysed reaction is tRNA(Val) + L-valine + ATP = L-valyl-tRNA(Val) + AMP + diphosphate. Catalyzes the attachment of valine to tRNA(Val). As ValRS can inadvertently accommodate and process structurally similar amino acids such as threonine, to avoid such errors, it has a 'posttransfer' editing activity that hydrolyzes mischarged Thr-tRNA(Val) in a tRNA-dependent manner. The sequence is that of Valine--tRNA ligase from Oceanobacillus iheyensis (strain DSM 14371 / CIP 107618 / JCM 11309 / KCTC 3954 / HTE831).